The sequence spans 376 residues: MIPFNAPPVVGTELDYMQSAMGSGKLCGDGGFTRRCQQWLEQRFGSAKVLLTPSCTASLEMAALLLDIQPGDEVIMPSYTFVSTANAFVLRGAKIVFVDVRPDTMNIDETLIEAAITDKTRVIVPVHYAGVACEMDTIMALAKKHNLFVVEDAAQGVMSTYKGRALGTIGHIGCFSFHETKNYTAGGEGGATLINDKALIERAEIIREKGTNRSQFFRGQVDKYTWRDIGSSYLMSDLQAAYLWAQLEAADRINQQRLALWQNYYDALAPLAKAGRIELPSIPDGCVQNAHMFYIKLRDIDDRSALINFLKEAEIMAVFHYIPLHGCPAGEHFGEFHGEDRYTTKESERLLRLPLFYNLSPVNQRTVIATLLNYFS.

Position 181 is an N6-(pyridoxal phosphate)lysine (Lys-181).

Belongs to the DegT/DnrJ/EryC1 family. In terms of assembly, homotetramer. It depends on pyridoxal 5'-phosphate as a cofactor.

The catalysed reaction is dTDP-4-amino-4,6-dideoxy-alpha-D-galactose + 2-oxoglutarate = dTDP-4-dehydro-6-deoxy-alpha-D-glucose + L-glutamate. The protein operates within bacterial outer membrane biogenesis; enterobacterial common antigen biosynthesis. Catalyzes the synthesis of dTDP-4-amino-4,6-dideoxy-D-galactose (dTDP-Fuc4N) from dTDP-4-keto-6-deoxy-D-glucose (dTDP-D-Glc4O) and L-glutamate. This is dTDP-4-amino-4,6-dideoxygalactose transaminase from Escherichia coli (strain K12).